The following is a 359-amino-acid chain: Nicotinate-nucleotide--dimethylbenzimidazole phosphoribosyltransferase (359 aa).

The Proton acceptor role is filled by glutamate 318.

The protein belongs to the CobT family. In terms of assembly, homodimer.

The catalysed reaction is 5,6-dimethylbenzimidazole + nicotinate beta-D-ribonucleotide = alpha-ribazole 5'-phosphate + nicotinate + H(+). It participates in nucleoside biosynthesis; alpha-ribazole biosynthesis; alpha-ribazole from 5,6-dimethylbenzimidazole: step 1/2. Its function is as follows. Catalyzes the synthesis of alpha-ribazole-5'-phosphate from nicotinate mononucleotide (NAMN) and 5,6-dimethylbenzimidazole (DMB). This Escherichia coli O8 (strain IAI1) protein is Nicotinate-nucleotide--dimethylbenzimidazole phosphoribosyltransferase.